The primary structure comprises 856 residues: DNA mismatch repair protein MutS (856 aa).

611–618 (GPNMGGKS) serves as a coordination point for ATP.

Belongs to the DNA mismatch repair MutS family.

Functionally, this protein is involved in the repair of mismatches in DNA. It is possible that it carries out the mismatch recognition step. This protein has a weak ATPase activity. This Histophilus somni (strain 129Pt) (Haemophilus somnus) protein is DNA mismatch repair protein MutS.